Here is a 460-residue protein sequence, read N- to C-terminus: Orexin receptor type 2 (460 aa).

Topologically, residues 1 to 54 (MSSTKLEDSLSRRNWSSASELNETQEPFLNPTDYDDEEFLRYLWREYLHPKEYE) are extracellular. Residues asparagine 14 and asparagine 22 are each glycosylated (N-linked (GlcNAc...) asparagine). The segment at 33-49 (DYDDEEFLRYLWREYLH) is required for response to orexin-A. Residues 55–75 (WVLIAGYIIVFVVALIGNVLV) traverse the membrane as a helical segment. Residues 76 to 88 (CVAVWKNHHMRTV) are Cytoplasmic-facing. A helical transmembrane segment spans residues 89 to 110 (TNYFIVNLSLADVLVTITCLPA). Topologically, residues 111-127 (TLVVDITETWFFGQSLC) are extracellular. Cysteine 127 and cysteine 210 are joined by a disulfide. Residues 128 to 150 (KVIPYLQTVSVSVSVLTLSCIAL) form a helical membrane-spanning segment. The Cytoplasmic portion of the chain corresponds to 151–170 (DRWYAICHPLMFKSTAKRAR). A helical transmembrane segment spans residues 171-191 (NSIVVIWIVSCIIMIPQAIVM). Residues 192–222 (ECSSMLPGLANKTTLFTVCDEHWGGEVYPKM) are Extracellular-facing. Asparagine 202 is a glycosylation site (N-linked (GlcNAc...) asparagine). Residues 223–243 (YHICFFLVTYMAPLCLMILAY) form a helical membrane-spanning segment. Topologically, residues 244 to 304 (LQIFRKLWCR…QIRARRKTAR (61 aa)) are cytoplasmic. Residues 305-326 (MLMVVLLVFAICYLPISILNVL) traverse the membrane as a helical segment. The Extracellular portion of the chain corresponds to 327-342 (KRVFGMFTHTEDRETV). The helical transmembrane segment at 343 to 366 (YAWFTFSHWLVYANSAANPIIYNF) threads the bilayer. The Cytoplasmic segment spans residues 367–460 (LSGKFREEFK…SSLLSTWLEV (94 aa)).

The protein belongs to the G-protein coupled receptor 1 family. Widely expressed. Isoform 2 not detected in skeletal muscle and kidney.

It localises to the cell membrane. In terms of biological role, nonselective, high-affinity receptor for both orexin-A and orexin-B neuropeptides. Triggers an increase in cytoplasmic Ca(2+) levels in response to orexin-A binding. The sequence is that of Orexin receptor type 2 (Hcrtr2) from Mus musculus (Mouse).